Reading from the N-terminus, the 288-residue chain is ATP phosphoribosyltransferase (288 aa).

The protein belongs to the ATP phosphoribosyltransferase family. Long subfamily. Mg(2+) serves as cofactor.

The protein resides in the cytoplasm. The enzyme catalyses 1-(5-phospho-beta-D-ribosyl)-ATP + diphosphate = 5-phospho-alpha-D-ribose 1-diphosphate + ATP. Its pathway is amino-acid biosynthesis; L-histidine biosynthesis; L-histidine from 5-phospho-alpha-D-ribose 1-diphosphate: step 1/9. Its activity is regulated as follows. Feedback inhibited by histidine. Catalyzes the condensation of ATP and 5-phosphoribose 1-diphosphate to form N'-(5'-phosphoribosyl)-ATP (PR-ATP). Has a crucial role in the pathway because the rate of histidine biosynthesis seems to be controlled primarily by regulation of HisG enzymatic activity. This chain is ATP phosphoribosyltransferase, found in Methanococcus maripaludis (strain DSM 14266 / JCM 13030 / NBRC 101832 / S2 / LL).